The following is a 258-amino-acid chain: Trans-aconitate 2-methyltransferase (258 aa).

The protein belongs to the methyltransferase superfamily. Tam family.

It is found in the cytoplasm. It catalyses the reaction trans-aconitate + S-adenosyl-L-methionine = (E)-3-(methoxycarbonyl)pent-2-enedioate + S-adenosyl-L-homocysteine. Functionally, catalyzes the S-adenosylmethionine monomethyl esterification of trans-aconitate. In Yersinia pestis bv. Antiqua (strain Antiqua), this protein is Trans-aconitate 2-methyltransferase.